A 433-amino-acid chain; its full sequence is Histidinol dehydrogenase (433 aa).

Substrate is bound by residues Ser-236, Gln-258, and His-261. The Zn(2+) site is built by Gln-258 and His-261. Residues Glu-325 and His-326 each act as proton acceptor in the active site. Positions 326, 359, 413, and 418 each coordinate substrate. Position 359 (Asp-359) interacts with Zn(2+). His-418 is a binding site for Zn(2+).

Belongs to the histidinol dehydrogenase family. Zn(2+) is required as a cofactor.

The enzyme catalyses L-histidinol + 2 NAD(+) + H2O = L-histidine + 2 NADH + 3 H(+). Its pathway is amino-acid biosynthesis; L-histidine biosynthesis; L-histidine from 5-phospho-alpha-D-ribose 1-diphosphate: step 9/9. In terms of biological role, catalyzes the sequential NAD-dependent oxidations of L-histidinol to L-histidinaldehyde and then to L-histidine. The polypeptide is Histidinol dehydrogenase (Pseudoalteromonas translucida (strain TAC 125)).